Reading from the N-terminus, the 284-residue chain is Bifunctional protein FolD (284 aa).

NADP(+) is bound by residues 166–168 and isoleucine 232; that span reads GAS.

Belongs to the tetrahydrofolate dehydrogenase/cyclohydrolase family. In terms of assembly, homodimer.

The enzyme catalyses (6R)-5,10-methylene-5,6,7,8-tetrahydrofolate + NADP(+) = (6R)-5,10-methenyltetrahydrofolate + NADPH. It carries out the reaction (6R)-5,10-methenyltetrahydrofolate + H2O = (6R)-10-formyltetrahydrofolate + H(+). It functions in the pathway one-carbon metabolism; tetrahydrofolate interconversion. Functionally, catalyzes the oxidation of 5,10-methylenetetrahydrofolate to 5,10-methenyltetrahydrofolate and then the hydrolysis of 5,10-methenyltetrahydrofolate to 10-formyltetrahydrofolate. The protein is Bifunctional protein FolD of Shewanella pealeana (strain ATCC 700345 / ANG-SQ1).